Here is a 1616-residue protein sequence, read N- to C-terminus: Protein P200 (1616 aa).

Disordered regions lie at residues 1 to 41 (MPKT…DKVE), 878 to 909 (HFQPDVQPEQTPQEAKFDSPVEIPQESSQAEF), 931 to 975 (QQLE…LDQN), 1004 to 1083 (DNVE…EPVD), 1100 to 1132 (FDKNQTQTEGLEEPQVSSEAEVVDQTTTDTVGE), and 1159 to 1433 (ISEP…SEEE). The interval 891-1389 (EAKFDSPVEI…QEAKFDSPVE (499 aa)) is 2 X 26 AA repeats. The segment covering 938–952 (EETVVTPTEVTAFEP) has biased composition (low complexity). Basic and acidic residues-rich tracts occupy residues 1012 to 1029 (QPKETEAEITFDETKELQ) and 1059 to 1081 (VFEKPQLETQTEKILEEEPKSEP). 2 repeat units span residues 1161–1186 (EPQVEQQPGEAVFEPSAEAKFDSPVE) and 1205–1236 (EIQPVESQPEATFDTVQPEQTPQEAKFDSPVE). Polar residues-rich tracts occupy residues 1200 to 1227 (VQTQPEIQPVESQPEATFDTVQPEQTPQ) and 1242 to 1251 (EFSSEPTQQH). The interval 1205–1389 (EIQPVESQPE…QEAKFDSPVE (185 aa)) is 2 X 32 AA repeats. Over residues 1256-1270 (ASFDEPNYDFDEPNY) the composition is skewed to acidic residues. Over residues 1276 to 1285 (SYDSDLQPSE) the composition is skewed to polar residues. The segment covering 1288–1302 (YDVDEPNYDFDEPNY) has biased composition (acidic residues). Low complexity predominate over residues 1309 to 1323 (SEPQFEPQVEQQPGE). Repeat copies occupy residues 1310–1339 (EPQFEPQVEQQPGEAVFEPSAEAKFDSPVE) and 1358–1389 (EIQPVESQPEATFDTVQPEQTPQEAKFDSPVE). Residues 1353–1380 (VQTQPEIQPVESQPEATFDTVQPEQTPQ) are compositionally biased toward polar residues. Residues 1392–1406 (QEPQVSSEPEVVVQP) are compositionally biased toward low complexity. A compositionally biased stretch (acidic residues) spans 1416-1433 (VLEEPQADEIQPEASEEE).

In terms of biological role, could be an accessory structural component in cytadherence. The protein is Protein P200 of Mycoplasma genitalium (strain ATCC 33530 / DSM 19775 / NCTC 10195 / G37) (Mycoplasmoides genitalium).